The sequence spans 185 residues: Elongation factor P (185 aa).

This sequence belongs to the elongation factor P family.

The protein localises to the cytoplasm. The protein operates within protein biosynthesis; polypeptide chain elongation. Its function is as follows. Involved in peptide bond synthesis. Stimulates efficient translation and peptide-bond synthesis on native or reconstituted 70S ribosomes in vitro. Probably functions indirectly by altering the affinity of the ribosome for aminoacyl-tRNA, thus increasing their reactivity as acceptors for peptidyl transferase. This chain is Elongation factor P, found in Synechococcus sp. (strain JA-2-3B'a(2-13)) (Cyanobacteria bacterium Yellowstone B-Prime).